The sequence spans 169 residues: Ribosome maturation factor RimP (169 aa).

This sequence belongs to the RimP family.

It is found in the cytoplasm. In terms of biological role, required for maturation of 30S ribosomal subunits. This chain is Ribosome maturation factor RimP, found in Pseudomonas putida (strain W619).